Reading from the N-terminus, the 576-residue chain is Proline--tRNA ligase (576 aa).

It belongs to the class-II aminoacyl-tRNA synthetase family. ProS type 1 subfamily. In terms of assembly, homodimer.

The protein resides in the cytoplasm. It carries out the reaction tRNA(Pro) + L-proline + ATP = L-prolyl-tRNA(Pro) + AMP + diphosphate. Catalyzes the attachment of proline to tRNA(Pro) in a two-step reaction: proline is first activated by ATP to form Pro-AMP and then transferred to the acceptor end of tRNA(Pro). As ProRS can inadvertently accommodate and process non-cognate amino acids such as alanine and cysteine, to avoid such errors it has two additional distinct editing activities against alanine. One activity is designated as 'pretransfer' editing and involves the tRNA(Pro)-independent hydrolysis of activated Ala-AMP. The other activity is designated 'posttransfer' editing and involves deacylation of mischarged Ala-tRNA(Pro). The misacylated Cys-tRNA(Pro) is not edited by ProRS. This Bordetella pertussis (strain Tohama I / ATCC BAA-589 / NCTC 13251) protein is Proline--tRNA ligase.